The chain runs to 85 residues: MAHKKGVGSSKNGRESHSKRLGVKVFGGEICKAGDILVRQRGTKHHPGNNVGIGKDHTLYSLIEGRVIFRKKQENRSYVSVEIIA.

It belongs to the bacterial ribosomal protein bL27 family.

The polypeptide is Large ribosomal subunit protein bL27 (Azobacteroides pseudotrichonymphae genomovar. CFP2).